The primary structure comprises 148 residues: uncharacterized protein (148 aa).

The interval 83 to 148 is disordered; sequence QPAVIPPVKA…TKKSNKKTRS (66 aa). 2 stretches are compositionally biased toward basic residues: residues 92–103 and 113–124; these read AKPKATKKKTPV and KQTKPKQSKPKS.

This is an uncharacterized protein from Mycoplasma genitalium (strain ATCC 33530 / DSM 19775 / NCTC 10195 / G37) (Mycoplasmoides genitalium).